The following is a 512-amino-acid chain: MVNSLLFGEMALAFGCPPGGGGCAGGGGGGGAGPGPSPVTAALRDDLGSNIHLLKGLNVRFRCFLAKVHELERRNRLLEKQLEQQQSERDRRLRYKTFSREQAVQTGPELLRPSAAGSGQALGAATGVNANAVALGGLPPGGGSHPQHYGRLPGTIWSYTQVRRTGGGGVETVQGPGVSWVHPDGVGVQIDTITPEIRALYNVLAKVKRERDEYKRRWEEELAKRMNLQTMVDTLQEAAQEAEAIQEEMNEKIERLKAELVVFKGLMSDPMTDLDTKIQEKAMKVDMDICRRIDITAKLCDVAQQRNSEDVSKIFQVVPKKKDRKVASDEDISEQDGEVNRFSDEEVGSMNITDEMKRMFNQLRETFDFDDDCDSLTWEENEDTLLLWEDFTNCNPTIDLQGEQEENLGNLIHETESFFKTRDKEYQETIGQIELELATAKSDMNRHLHEYMEMCSMKRGLDVQMETCRRLIKGSADRNSPSPSSVASSDSGSTDEIQEDLEREADVEPMVS.

Positions 50-479 constitute an IF rod domain; that stretch reads NIHLLKGLNV…RLIKGSADRN (430 aa). A disordered region spans residues 473–512; it reads KGSADRNSPSPSSVASSDSGSTDEIQEDLEREADVEPMVS. Residues 480-492 are compositionally biased toward low complexity; the sequence is SPSPSSVASSDSG. Residues 496-512 show a composition bias toward acidic residues; it reads EIQEDLEREADVEPMVS.

It belongs to the intermediate filament family.

This chain is Intermediate filament family orphan 2 (Iffo2), found in Mus musculus (Mouse).